Consider the following 437-residue polypeptide: Adenylosuccinate synthetase (437 aa).

GTP-binding positions include 12-18 (GDEGKGK) and 40-42 (GHT). D13 functions as the Proton acceptor in the catalytic mechanism. The Mg(2+) site is built by D13 and G40. Residues 13 to 16 (DEGK), 38 to 41 (NAGH), T131, R145, Q225, and T240 contribute to the IMP site. H41 serves as the catalytic Proton donor. The disordered stretch occupies residues 281–304 (TELLGADGKPDADGERLGTRGHEF). Residues 288–303 (GKPDADGERLGTRGHE) show a composition bias toward basic and acidic residues. 306 to 312 (TTTGRQR) lines the substrate pocket. An IMP-binding site is contributed by R310. GTP is bound by residues R312, 338-340 (KLD), and 420-422 (STS).

This sequence belongs to the adenylosuccinate synthetase family. In terms of assembly, homodimer. Mg(2+) is required as a cofactor.

It localises to the cytoplasm. It catalyses the reaction IMP + L-aspartate + GTP = N(6)-(1,2-dicarboxyethyl)-AMP + GDP + phosphate + 2 H(+). It participates in purine metabolism; AMP biosynthesis via de novo pathway; AMP from IMP: step 1/2. In terms of biological role, plays an important role in the de novo pathway of purine nucleotide biosynthesis. Catalyzes the first committed step in the biosynthesis of AMP from IMP. In Ruegeria sp. (strain TM1040) (Silicibacter sp.), this protein is Adenylosuccinate synthetase.